We begin with the raw amino-acid sequence, 405 residues long: mRNA cap guanine-N(7) methyltransferase (405 aa).

A disordered region spans residues 1–78 (MDNILNPEDN…PRLEEGHGSL (78 aa)). 2 stretches are compositionally biased toward polar residues: residues 9–18 (DNVSQTNTET) and 36–45 (KFTASGQNLD). Residues 58–75 (KAGEPESPSKRPRLEEGH) show a composition bias toward basic and acidic residues. Positions 97–404 (SRIFHLRNFN…IYLLFAFEKQ (308 aa)) constitute an mRNA cap 0 methyltransferase domain. Residue 106–107 (NN) coordinates mRNA. 6 residues coordinate S-adenosyl-L-methionine: Lys110, Gly134, Asp156, Asp190, Gln213, and Tyr218.

This sequence belongs to the class I-like SAM-binding methyltransferase superfamily. mRNA cap 0 methyltransferase family.

The protein resides in the nucleus. It catalyses the reaction a 5'-end (5'-triphosphoguanosine)-ribonucleoside in mRNA + S-adenosyl-L-methionine = a 5'-end (N(7)-methyl 5'-triphosphoguanosine)-ribonucleoside in mRNA + S-adenosyl-L-homocysteine. Its function is as follows. Catalytic subunit of the mRNA-capping methyltransferase RNMT:RAMAC complex that methylates the N7 position of the added guanosine to the 5'-cap structure of mRNAs. Binds RNA containing 5'-terminal GpppC. In Xenopus tropicalis (Western clawed frog), this protein is mRNA cap guanine-N(7) methyltransferase (rnmt).